Consider the following 198-residue polypeptide: Protein GrpE (198 aa).

Belongs to the GrpE family. As to quaternary structure, homodimer.

It is found in the cytoplasm. Participates actively in the response to hyperosmotic and heat shock by preventing the aggregation of stress-denatured proteins, in association with DnaK and GrpE. It is the nucleotide exchange factor for DnaK and may function as a thermosensor. Unfolded proteins bind initially to DnaJ; upon interaction with the DnaJ-bound protein, DnaK hydrolyzes its bound ATP, resulting in the formation of a stable complex. GrpE releases ADP from DnaK; ATP binding to DnaK triggers the release of the substrate protein, thus completing the reaction cycle. Several rounds of ATP-dependent interactions between DnaJ, DnaK and GrpE are required for fully efficient folding. The polypeptide is Protein GrpE (Actinobacillus pleuropneumoniae serotype 5b (strain L20)).